The chain runs to 450 residues: Phosphoglucosamine mutase (450 aa).

The active-site Phosphoserine intermediate is the Ser101. Mg(2+)-binding residues include Ser101, Asp242, Asp244, and Asp246. Ser101 carries the post-translational modification Phosphoserine.

Belongs to the phosphohexose mutase family. Mg(2+) serves as cofactor. In terms of processing, activated by phosphorylation.

It catalyses the reaction alpha-D-glucosamine 1-phosphate = D-glucosamine 6-phosphate. Functionally, catalyzes the conversion of glucosamine-6-phosphate to glucosamine-1-phosphate. The chain is Phosphoglucosamine mutase from Rhodopseudomonas palustris (strain ATCC BAA-98 / CGA009).